A 119-amino-acid polypeptide reads, in one-letter code: Large ribosomal subunit protein bL20 (119 aa).

This sequence belongs to the bacterial ribosomal protein bL20 family.

Functionally, binds directly to 23S ribosomal RNA and is necessary for the in vitro assembly process of the 50S ribosomal subunit. It is not involved in the protein synthesizing functions of that subunit. This Dehalococcoides mccartyi (strain ATCC BAA-2266 / KCTC 15142 / 195) (Dehalococcoides ethenogenes (strain 195)) protein is Large ribosomal subunit protein bL20.